Here is a 216-residue protein sequence, read N- to C-terminus: UPF0323 lipoprotein HPAG1_0235 (216 aa).

The N-terminal stretch at 1–27 is a signal peptide; that stretch reads MKKPYRKISDYAIVGGLSALVMVSIVG. Cys-28 carries N-palmitoyl cysteine lipidation. The S-diacylglycerol cysteine moiety is linked to residue Cys-28. A compositionally biased stretch (polar residues) spans 159-196; the sequence is QRTYKSPQAYQRSQNSFSKSAPSASGMGTASKGQSGFF. Residues 159-216 form a disordered region; that stretch reads QRTYKSPQAYQRSQNSFSKSAPSASGMGTASKGQSGFFGSSRPTSSPAVSSGTRGFNA. A compositionally biased stretch (low complexity) spans 198-209; it reads SSRPTSSPAVSS.

This sequence belongs to the UPF0323 family.

The protein localises to the cell membrane. The sequence is that of UPF0323 lipoprotein HPAG1_0235 from Helicobacter pylori (strain HPAG1).